The following is a 124-amino-acid chain: Small ribosomal subunit protein uS12 (124 aa).

Residues Met-1–Gln-30 form a disordered region. Residues Arg-9–Lys-18 show a composition bias toward basic residues.

Belongs to the universal ribosomal protein uS12 family. In terms of assembly, part of the 30S ribosomal subunit. Contacts proteins S8 and S17. May interact with IF1 in the 30S initiation complex.

With S4 and S5 plays an important role in translational accuracy. Functionally, interacts with and stabilizes bases of the 16S rRNA that are involved in tRNA selection in the A site and with the mRNA backbone. Located at the interface of the 30S and 50S subunits, it traverses the body of the 30S subunit contacting proteins on the other side and probably holding the rRNA structure together. The combined cluster of proteins S8, S12 and S17 appears to hold together the shoulder and platform of the 30S subunit. The protein is Small ribosomal subunit protein uS12 of Leifsonia xyli subsp. xyli (strain CTCB07).